The primary structure comprises 370 residues: Phenylalanine dehydrogenase (370 aa).

NAD(+) is bound at residue arginine 44. Position 68 (lysine 68) interacts with L-phenylalanine. The Proton donor/acceptor role is filled by lysine 80. An L-phenylalanine-binding site is contributed by threonine 114–aspartate 115. NAD(+)-binding positions include aspartate 115, serine 146, threonine 150, glycine 180–phenylalanine 186, aspartate 203–valine 204, alanine 243–isoleucine 244, and alanine 264–asparagine 266. Residue asparagine 266 participates in L-phenylalanine binding.

This sequence belongs to the Glu/Leu/Phe/Val dehydrogenases family.

The catalysed reaction is L-phenylalanine + NAD(+) + H2O = 3-phenylpyruvate + NH4(+) + NADH + H(+). It functions in the pathway amino-acid biosynthesis; L-phenylalanine biosynthesis; L-phenylalanine from phenylpyruvate (PDH route): step 1/1. Functionally, catalyzes the reversible NAD(+)-dependent oxidative deamination of L-phenylalanine to phenylpyruvate. The sequence is that of Phenylalanine dehydrogenase from Caldalkalibacillus thermarum (strain TA2.A1).